We begin with the raw amino-acid sequence, 91 residues long: Small ribosomal subunit protein uS19 (91 aa).

It belongs to the universal ribosomal protein uS19 family.

Its function is as follows. Protein S19 forms a complex with S13 that binds strongly to the 16S ribosomal RNA. The chain is Small ribosomal subunit protein uS19 from Colwellia psychrerythraea (strain 34H / ATCC BAA-681) (Vibrio psychroerythus).